A 484-amino-acid polypeptide reads, in one-letter code: Probable chitinase 2 (484 aa).

The N-terminal stretch at 1–33 (MTLRSRLSGEAPQLWLLLLLASTASSLWASVAA) is a signal peptide. The region spanning 41–432 (KVVVCYVSTW…RTINEATMLA (392 aa)) is the GH18 domain. C45 and C70 form a disulfide bridge. Chitin is bound by residues 98–99 (EE) and 125–128 (GGWN). The active-site Proton donor is E168. Chitin-binding positions include Y169, 231–234 (MCYD), and W384. S467 is modified (phosphoserine).

It belongs to the glycosyl hydrolase 18 family. Chitinase class II subfamily.

It carries out the reaction Random endo-hydrolysis of N-acetyl-beta-D-glucosaminide (1-&gt;4)-beta-linkages in chitin and chitodextrins.. This is Probable chitinase 2 from Drosophila melanogaster (Fruit fly).